Reading from the N-terminus, the 507-residue chain is Maturase K (507 aa).

The protein belongs to the intron maturase 2 family. MatK subfamily.

The protein localises to the plastid. It is found in the chloroplast. Functionally, usually encoded in the trnK tRNA gene intron. Probably assists in splicing its own and other chloroplast group II introns. This Araucaria heterophylla (Norfolk Island pine) protein is Maturase K.